A 283-amino-acid chain; its full sequence is Putative replication protein XF_b0001 (283 aa).

The chain is Putative replication protein XF_b0001 from Xylella fastidiosa (strain 9a5c).